The following is a 241-amino-acid chain: MYQKSLLFSLLATSALAQFPIPDSKGSVTFDAPYEVAAGKTYDGGYKTYGRGVSCSGQGEGGQDDAVFLIQEGGTLKNAIIGSDQIEGVYCLGACTIENVWWEAVCEDALSLKGGSGPYNIIGGGAQGADDKVIQHNSGGQVNIDGFTVYDFGKLYRSCGNCDEQHARTVTIRNVVANSGKTLVGINSNLGDTASIDSSTCATDVKKICVEYKGNNSGDEPEEVSEGPSDACQYSEPLSSC.

Positions 1–17 are cleaved as a signal peptide; sequence MYQKSLLFSLLATSALA. N-linked (GlcNAc...) asparagine glycosylation occurs at Asn-215. The interval 215–241 is disordered; the sequence is NNSGDEPEEVSEGPSDACQYSEPLSSC.

This sequence belongs to the polysaccharide lyase 3 family. Requires Ca(2+) as cofactor.

The protein localises to the secreted. It catalyses the reaction Eliminative cleavage of (1-&gt;4)-alpha-D-galacturonan to give oligosaccharides with 4-deoxy-alpha-D-galact-4-enuronosyl groups at their non-reducing ends.. Pectinolytic enzyme consist of four classes of enzymes: pectin lyase, polygalacturonase, pectin methylesterase and rhamnogalacturonase. Among pectinolytic enzymes, pectin lyase is the most important in depolymerization of pectin, since it cleaves internal glycosidic bonds of highly methylated pectins. Favors pectate, the anion, over pectin, the methyl ester. The protein is Probable pectate lyase D (plyD) of Neosartorya fischeri (strain ATCC 1020 / DSM 3700 / CBS 544.65 / FGSC A1164 / JCM 1740 / NRRL 181 / WB 181) (Aspergillus fischerianus).